Here is a 182-residue protein sequence, read N- to C-terminus: Peptidyl-prolyl cis-trans isomerase C, mitochondrial (182 aa).

The N-terminal 20 residues, 1-20 (MFKRSIIQQSRLFSNSASRL), are a transit peptide targeting the mitochondrion. One can recognise a PPIase cyclophilin-type domain in the interval 25 to 181 (FFDPAVNGTK…AEIVIEEAGE (157 aa)).

It belongs to the cyclophilin-type PPIase family.

It is found in the mitochondrion matrix. The enzyme catalyses [protein]-peptidylproline (omega=180) = [protein]-peptidylproline (omega=0). Its activity is regulated as follows. Inhibited by the immunosuppressant drug cyclosporin A and by SDZ NIM811, a PPIase inhibitor. PPIases accelerate the folding of proteins. It catalyzes the cis-trans isomerization of proline imidic peptide bonds in oligopeptides. This isozyme is required for growth on lactate at high temperature. In Saccharomyces cerevisiae (strain ATCC 204508 / S288c) (Baker's yeast), this protein is Peptidyl-prolyl cis-trans isomerase C, mitochondrial (CPR3).